Consider the following 215-residue polypeptide: Probable GTP-binding protein EngB (215 aa).

One can recognise an EngB-type G domain in the interval 26 to 200 (EGIEVAFAGR…RAKLDEWFAP (175 aa)). GTP is bound by residues 34 to 41 (GRSNAGKS), 61 to 65 (GRTQL), 79 to 82 (DLPG), 146 to 149 (TKAD), and 179 to 181 (FSS). Mg(2+) contacts are provided by Ser41 and Thr63.

Belongs to the TRAFAC class TrmE-Era-EngA-EngB-Septin-like GTPase superfamily. EngB GTPase family. Mg(2+) serves as cofactor.

Functionally, necessary for normal cell division and for the maintenance of normal septation. The protein is Probable GTP-binding protein EngB of Aliivibrio fischeri (strain ATCC 700601 / ES114) (Vibrio fischeri).